A 120-amino-acid polypeptide reads, in one-letter code: Ribonuclease P protein component (120 aa).

The protein belongs to the RnpA family. Consists of a catalytic RNA component (M1 or rnpB) and a protein subunit.

It catalyses the reaction Endonucleolytic cleavage of RNA, removing 5'-extranucleotides from tRNA precursor.. In terms of biological role, RNaseP catalyzes the removal of the 5'-leader sequence from pre-tRNA to produce the mature 5'-terminus. It can also cleave other RNA substrates such as 4.5S RNA. The protein component plays an auxiliary but essential role in vivo by binding to the 5'-leader sequence and broadening the substrate specificity of the ribozyme. This Chelativorans sp. (strain BNC1) protein is Ribonuclease P protein component.